A 426-amino-acid chain; its full sequence is D-tagatose-1,6-bisphosphate aldolase subunit KbaZ (426 aa).

The protein belongs to the GatZ/KbaZ family. KbaZ subfamily. As to quaternary structure, forms a complex with KbaY.

The protein operates within carbohydrate metabolism; D-tagatose 6-phosphate degradation; D-glyceraldehyde 3-phosphate and glycerone phosphate from D-tagatose 6-phosphate: step 2/2. Component of the tagatose-1,6-bisphosphate aldolase KbaYZ that is required for full activity and stability of the Y subunit. Could have a chaperone-like function for the proper and stable folding of KbaY. When expressed alone, KbaZ does not show any aldolase activity. The sequence is that of D-tagatose-1,6-bisphosphate aldolase subunit KbaZ from Escherichia coli O17:K52:H18 (strain UMN026 / ExPEC).